The following is a 203-amino-acid chain: Thymidylate kinase (203 aa).

7–14 (GGEGAGKT) contributes to the ATP binding site.

Belongs to the thymidylate kinase family.

It carries out the reaction dTMP + ATP = dTDP + ADP. Functionally, phosphorylation of dTMP to form dTDP in both de novo and salvage pathways of dTTP synthesis. The sequence is that of Thymidylate kinase (tmk) from Chlamydia muridarum (strain MoPn / Nigg).